The sequence spans 482 residues: Ribosomal RNA small subunit methyltransferase F (482 aa).

S-adenosyl-L-methionine is bound by residues 119-125 (ASAPGSK), glutamate 143, aspartate 170, and aspartate 188. The active-site Nucleophile is the cysteine 241.

Belongs to the class I-like SAM-binding methyltransferase superfamily. RsmB/NOP family.

The protein localises to the cytoplasm. It catalyses the reaction cytidine(1407) in 16S rRNA + S-adenosyl-L-methionine = 5-methylcytidine(1407) in 16S rRNA + S-adenosyl-L-homocysteine + H(+). Its function is as follows. Specifically methylates the cytosine at position 1407 (m5C1407) of 16S rRNA. The chain is Ribosomal RNA small subunit methyltransferase F from Shewanella sp. (strain MR-7).